The following is a 427-amino-acid chain: Interleukin-13 receptor subunit alpha-1 (427 aa).

Positions 1-21 (MEWPARLCGLWALLLCAGGGG) are cleaved as a signal peptide. Residues 22–343 (GGGGAAPTET…MSIGKKRNST (322 aa)) are Extracellular-facing. Fibronectin type-III domains are found at residues 34-123 (PVTN…PPEG), 128-226 (AVTE…TSRV), and 227-339 (KPDP…IGKK). Residues Asn-37 and Asn-61 are each glycosylated (N-linked (GlcNAc...) asparagine). Cystine bridges form between Cys-62–Cys-102, Cys-95–Cys-117, and Cys-134–Cys-144. Residues Asn-105, Asn-138, and Asn-157 are each glycosylated (N-linked (GlcNAc...) asparagine). Cys-173 and Cys-185 form a disulfide bridge. N-linked (GlcNAc...) asparagine glycans are attached at residues Asn-235, Asn-265, Asn-293, Asn-329, and Asn-341. Cystine bridges form between Cys-257/Cys-320 and Cys-282/Cys-296. The WSXWS motif motif lies at 327–331 (WSNWS). Residues 344 to 367 (LYITMLLIVPVIVAGAIIVLLLYL) traverse the membrane as a helical segment. The Cytoplasmic portion of the chain corresponds to 368–427 (KRLKIIIFPPIPDPGKIFKEMFGDQNDDTLHWKKYDIYEKQTKEETDSVVLIENLKKASQ). The Box 1 motif signature appears at 374–382 (IFPPIPDPG).

It belongs to the type I cytokine receptor family. Type 5 subfamily. As to quaternary structure, interleukin-13 receptor is a complex of IL4R, IL13RA1, and possibly other components. Interacts with TRAF3IP1. Interacts with IL4. As to expression, ubiquitous. Highest levels in heart, liver, skeletal muscle and ovary; lowest levels in brain, lung and kidney. Also found in B-cells, T-cells and endothelial cells.

It is found in the membrane. In terms of biological role, binds with low affinity to interleukin-13 (IL13). Together with IL4RA can form a functional receptor for IL13. Also serves as an alternate accessory protein to the common cytokine receptor gamma chain for interleukin-4 (IL4) signaling, but cannot replace the function of IL2RG in allowing enhanced interleukin-2 (IL2) binding activity. The sequence is that of Interleukin-13 receptor subunit alpha-1 (IL13RA1) from Homo sapiens (Human).